We begin with the raw amino-acid sequence, 583 residues long: Propane 2-monooxygenase operon transcriptional activator MimR (583 aa).

Positions 320–513 constitute a Sigma-54 factor interaction domain; that stretch reads LAGQSSSFRR…LRHVLTETVR (194 aa). ATP is bound by residues 349-356 and 395-404; these read ERGSGRTY and SADFAVIVSD.

Acts as a transcriptional activator of the mimABCD operon encoding the propane 2-monooxygenase complex. This Mycolicibacterium smegmatis (strain ATCC 700084 / mc(2)155) (Mycobacterium smegmatis) protein is Propane 2-monooxygenase operon transcriptional activator MimR.